Reading from the N-terminus, the 818-residue chain is FAD-dependent monooxygenase anuJ (818 aa).

FAD-binding residues include Glu-46, Ala-60, Arg-122, Asp-329, and Gly-342. The next 3 helical transmembrane spans lie at 471-491 (VLWALPLLGMAVAGLLTMFSV), 539-559 (FFYQPFSFFADYGVWYGIMLV), and 571-591 (LSFALLWGMLNMWGIAIFVPI). Asn-614 carries N-linked (GlcNAc...) asparagine glycosylation. A run of 2 helical transmembrane segments spans residues 621–641 (ILPVLLATHYATFMDAYLSPV) and 647–667 (AAGFLWELFPVWLSLAQAGLA). N-linked (GlcNAc...) asparagine glycosylation occurs at Asn-683. 2 helical membrane-spanning segments follow: residues 743-763 (WDQVFFAIPNLFWIILLFADL) and 778-798 (FSALGLIIAGGNGTMLGLMWL).

This sequence belongs to the paxM FAD-dependent monooxygenase family.

The protein resides in the membrane. Its function is as follows. Highly reducing polyketide synthase; part of the gene cluster that mediates the biosynthesis of annullatin D, an alkylated aromatic polyketide with a fused dihydrobenzofuran lactone ring system that exhibits potent agonistic activities toward the cannabinoid receptors. AnuJ does not seem to play a role within the pathway. The annullatin backbone 2-hydroxymethyl-3-pentylphenol is assembled from one acetyl-CoA starter unit and 5 malonyl-CoA elongation units by cooperation of the highly reducing polyketide synthase anuA, the short-chain dehydrogenase anuB and the oxidoreductase anuC, before being hydroxylated at the C-5 alkyl chain by the cytochrome P450 monooxygenase anuE to form (8S)-annullatin E. The prenyltransferase anuH subsequently installs one isoprenyl group at the benzene ring to form (8S)-annullatin J. Enzymatic or nonenzymatic dihydro-benzofuran ring formation between the prenyl and the phenolic hydroxyl groups in (8S)-annullatin J results in two diastereomers (2S,9S)-annullatin H and compound 12. The intermediate (2S,9S)-annullatin H is then converted to (2S,9S)-annullatin D by the FAD-linked oxidoreductase anuG-catalyzed five-member lactone ring formation. The isomer 12 acts as a substrate for the short-chain dehydrogenase anuF and is oxidized to (2R)-annullatin F, which is subsequently acetylated by an acetyltransferase leading to (2R)-annullatin G formation. The remaining enzymes identified within the cluster, anuD, anuI and anuJ, seem not to be involved in annullatin biosynthesis. The sequence is that of FAD-dependent monooxygenase anuJ from Penicillium roqueforti (strain FM164).